Here is a 353-residue protein sequence, read N- to C-terminus: Cyanuric acid amidohydrolase (353 aa).

The RU A stretch occupies residues 1-90 (MSSTALYTVP…NIFVRDERQY (90 aa)). Residues R49 and 69 to 70 (SG) contribute to the substrate site. The segment at 96–231 (GLVTAVGRTR…CHILVVAESD (136 aa)) is RU B. K145 is a catalytic residue. Substrate-binding positions include R177 and 214–215 (SS). Residue S214 is the Nucleophile of the active site. Residues 237–353 (LRAAHTAMRD…TANATGEASR (117 aa)) form an RU C region. E275 provides a ligand contact to Mg(2+). Residues R302 and 321–322 (SG) each bind substrate. 5 residues coordinate Mg(2+): A324, Q327, G328, P329, and G332.

It belongs to the cyclic amide hydrolase (CyAH) family. As to quaternary structure, homotetramer.

The catalysed reaction is cyanurate + H2O = 1-carboxybiuret + H(+). It functions in the pathway xenobiotic degradation; atrazine degradation; biuret from cyanurate: step 1/1. Its activity is regulated as follows. Inhibited by barbituric acid. Functionally, responsible for the hydrolysis of cyanuric acid, an intermediate formed during catabolism of s-triazine based compounds in herbicides such as atrazine and polymers such as melamine. Catalyzes the hydrolytic opening of the s-triazine ring of cyanuric acid (2,4,6-trihydroxy-s-triazine) to yield carbon dioxide and carboxybiuret, which spontaneously decarboxylates to biuret. Required for growth on melamine or cyanuric acid as sole nitrogen source. This chain is Cyanuric acid amidohydrolase, found in Rhodococcus sp.